The following is a 342-amino-acid chain: L-threonine 3-dehydrogenase (342 aa).

Cysteine 38 serves as a coordination point for Zn(2+). Catalysis depends on charge relay system residues threonine 40 and histidine 43. Zn(2+) is bound by residues histidine 63, glutamate 64, cysteine 93, cysteine 96, cysteine 99, and cysteine 107. NAD(+)-binding positions include isoleucine 175, aspartate 195, arginine 200, 262–264, and 286–287; these read LGI and IY.

The protein belongs to the zinc-containing alcohol dehydrogenase family. As to quaternary structure, homotetramer. Requires Zn(2+) as cofactor.

Its subcellular location is the cytoplasm. The catalysed reaction is L-threonine + NAD(+) = (2S)-2-amino-3-oxobutanoate + NADH + H(+). It functions in the pathway amino-acid degradation; L-threonine degradation via oxydo-reductase pathway; glycine from L-threonine: step 1/2. Its function is as follows. Catalyzes the NAD(+)-dependent oxidation of L-threonine to 2-amino-3-ketobutyrate. The chain is L-threonine 3-dehydrogenase from Burkholderia lata (strain ATCC 17760 / DSM 23089 / LMG 22485 / NCIMB 9086 / R18194 / 383).